A 163-amino-acid chain; its full sequence is Ribonuclease P protein subunit p25-like protein (163 aa).

2 disordered regions span residues 1-22 and 129-163; these read MEHY…PQLP and NECG…DTRS. Residues 143–152 show a composition bias toward low complexity; the sequence is GSMPSSSCGP. Residues 153–163 are compositionally biased toward basic residues; the sequence is RSRRRARDTRS.

It belongs to the histone-like Alba family.

The protein localises to the nucleus. Functionally, may be a component of ribonuclease P or MRP. This Homo sapiens (Human) protein is Ribonuclease P protein subunit p25-like protein (RPP25L).